Reading from the N-terminus, the 506-residue chain is ATP synthase subunit alpha (506 aa).

Residue 172–179 (GDRKTGKT) participates in ATP binding.

The protein belongs to the ATPase alpha/beta chains family. As to quaternary structure, F-type ATPases have 2 components, CF(1) - the catalytic core - and CF(0) - the membrane proton channel. CF(1) has five subunits: alpha(3), beta(3), gamma(1), delta(1), epsilon(1). CF(0) has three main subunits: a(1), b(2) and c(9-12). The alpha and beta chains form an alternating ring which encloses part of the gamma chain. CF(1) is attached to CF(0) by a central stalk formed by the gamma and epsilon chains, while a peripheral stalk is formed by the delta and b chains.

It localises to the cell membrane. It carries out the reaction ATP + H2O + 4 H(+)(in) = ADP + phosphate + 5 H(+)(out). Produces ATP from ADP in the presence of a proton gradient across the membrane. The alpha chain is a regulatory subunit. The polypeptide is ATP synthase subunit alpha (Lactobacillus gasseri (strain ATCC 33323 / DSM 20243 / BCRC 14619 / CIP 102991 / JCM 1131 / KCTC 3163 / NCIMB 11718 / NCTC 13722 / AM63)).